Here is a 180-residue protein sequence, read N- to C-terminus: Oligoribonuclease (180 aa).

Residues 7–170 enclose the Exonuclease domain; that stretch reads LIWIDLEMTG…DDIRESIAEL (164 aa). The active site involves Y128.

The protein belongs to the oligoribonuclease family.

The protein localises to the cytoplasm. Functionally, 3'-to-5' exoribonuclease specific for small oligoribonucleotides. In Pseudomonas putida (strain ATCC 700007 / DSM 6899 / JCM 31910 / BCRC 17059 / LMG 24140 / F1), this protein is Oligoribonuclease.